Consider the following 309-residue polypeptide: uncharacterized protein (309 aa).

The RPE1 insert domain occupies 9–55 (NFLYNIANKDGFKGYKECRTSAYKNVFDDSSTKSTSKFHLGISDTKN). The helical transmembrane segment at 62-82 (IIGLILIIFAGVLFYAYILQH) threads the bilayer.

The protein belongs to the LicD transferase family.

Its subcellular location is the membrane. This is an uncharacterized protein from Rickettsia typhi (strain ATCC VR-144 / Wilmington).